Consider the following 446-residue polypeptide: Putative diacyglycerol O-acyltransferase MT3481 (446 aa).

Residue histidine 129 is the Proton acceptor of the active site. Residues 425 to 446 (SRALPSAARRGRPSVPTARARH) form a disordered region.

Belongs to the long-chain O-acyltransferase family.

The catalysed reaction is an acyl-CoA + a 1,2-diacyl-sn-glycerol = a triacyl-sn-glycerol + CoA. It participates in glycerolipid metabolism; triacylglycerol biosynthesis. In Mycobacterium tuberculosis (strain CDC 1551 / Oshkosh), this protein is Putative diacyglycerol O-acyltransferase MT3481.